The sequence spans 689 residues: Transcription termination factor Rho (689 aa).

The span at Met1–Thr20 shows a compositional bias: polar residues. Disordered regions lie at residues Met1–Val90 and Ala151–Asn213. Over residues Pro52–Ala65 the composition is skewed to basic residues. Composition is skewed to low complexity over residues Asn170–Glu183 and Asn191–Asn213. The 76-residue stretch at Ile287–Glu362 folds into the Rho RNA-BD domain. Residues Gly405–Ser410, Arg417–Val422, and Arg448 each bind ATP.

This sequence belongs to the Rho family. Homohexamer. The homohexamer assembles into an open ring structure.

Functionally, facilitates transcription termination by a mechanism that involves Rho binding to the nascent RNA, activation of Rho's RNA-dependent ATPase activity, and release of the mRNA from the DNA template. The sequence is that of Transcription termination factor Rho from Fibrobacter succinogenes (strain ATCC 19169 / S85).